The following is an 841-amino-acid chain: Neuronal tyrosine-phosphorylated phosphoinositide-3-kinase adapter 1 (841 aa).

Disordered regions lie at residues 1–45, 64–448, 655–679, 745–769, and 812–833; these read MNLL…PGVR, PASQ…PAAL, RAWNGSAEGPGKVEREDRGPGTSGI, RPCSQPRDALSQPHPALPLPLPLPP, and LPSWRRGPEPRKSGTPPCRRQH. Residues 8-25 show a composition bias toward basic and acidic residues; it reads TKLEWRQHKEEEAKRSSS. Positions 26–39 are enriched in low complexity; the sequence is KEVAPAGSAGPAAG. An involved in CYFIP1- and NCKAP1-binding region spans residues 76-186; the sequence is SAMAPRSLSC…DESCPPGPSP (111 aa). The span at 94 to 103 shows a compositional bias: gly residues; that stretch reads VGGGPGGASG. Residues 114–123 show a composition bias toward basic residues; that stretch reads PPAKPRRHPS. Positions 167–176 are enriched in polar residues; that stretch reads SPNTQLSVSF. Residues 224-243 show a composition bias toward gly residues; it reads FRGGGRSGGGLAGPPLGGGG. Over residues 252–261 the composition is skewed to acidic residues; it reads SDSEESEAIY. Positions 279–295 are enriched in pro residues; it reads GPPPLTATSPPQQPHAL. Pro residues predominate over residues 759 to 769; that stretch reads PALPLPLPLPP.

It belongs to the NYAP family. Interacts with ACOT9, ARHGAP26 and PIK3R2. Interacts with components of the WAVE1 complex, CYFIP1 and NCKAP1; this interaction mediates PI3K-WAVE1 association and actin cytoskeleton remodeling. Phosphorylated on tyrosine residues by FYN upon stimulation with CNTN5.

Activates PI3K and concomitantly recruits the WAVE1 complex to the close vicinity of PI3K and regulates neuronal morphogenesis. This is Neuronal tyrosine-phosphorylated phosphoinositide-3-kinase adapter 1 (NYAP1) from Homo sapiens (Human).